The primary structure comprises 1192 residues: MAECSGLQFVSPYAFEAMQKVDVVRLAALSDPELRLLLPCLVRMALCAPADQSQSWAQDKKLILRLLSGVEAVNSIVALLSVDFHALEQDASKEQQLRHKLGGGSGESILVSQLQHGLTLEFEHSDSPRRLRLVLSELLAIMNKVSESNGEFFLKSSELFESPVYLEEAADVLCILQAELPSLLPIVDVAEALLHVKNGAWFLCLLVANVPDSFNEVCRGLIKNGERQDEESVGGRRRTEALRHLCKMNPSQALRVRGMVVEECHLPGLGVALTLDHTKNESSDDGVSDLVCFVSGLLLGTNAKVRTWFGTFIRNGQQRKRDNISSVLWQMRRQLLLELMGILPTVRSTHIVEEADVDTEPNVSVYSGLKEEHVVKASALLRLYCALMGIAGLKPTDEEAEQLLQLMTSRPPATPAGVRFVSLSFCMLLAFSTLVSTPEQEQLMVMWLSWMIKEEAYFESISGVSASFGEMLLLVAMYFHSNQLSAIIDLVCSTLGMKIVIKPSSLSRMKTIFTQEIFTEQVVTAHAVRVPVTGSLSANITGFLPIHCIYQLLRSRSFTKHKVSIKDWIYRQLCETTTPLHPQLLPLIDVYINSILTPASKSNPEATNQPVTEQEILNVFQGLTGGENTRPAQRYSITTQLLVLYYVLSYEEALLANTKILAAMQRKPKSYSSALMDQIPIKYLIRQAQGLQQELGGLHSALLRLLATNYPHLCIVEDWICEEQITGTDALLRRMLLTTIAKNHSPKQLQEAFSMLPGNHTQLMQILEHLTLLSAGELIPYAEVLTSNMNCLLNAGVPRRILQTVNKLWMVLNTVMPRRLWVMTVNALQPSVKIVRQQKYTQNDLMIDPLIVLRCDQRVHRSPPLMDITLHMLNGYLLASKAYLNAHLKETAEQDIRPSQNNAMGPETPEVTREELKNALLAAQDSAAVQILLEICLPTEEEKAQSSSTYSLLKSVQSTTSPKSSDVEEEEDSLLCNLREVQCLICCLLHQMYIADPNIVKLVHFQGYPCELLALTVAGIPSMHICLDFIPELIAQPELEKQIFAIQLLSFLCIQYALPKSLSVARLAINVMGTLLTVLTQSKRYAFFMPTLPCLVSFCQAFPPLYEDIMSLLIQIGQVCASDVATQTRDFDPIITRLQQLKERPNEVSGLCKDSPYKSCSRDITSVDPDVQLCQCVESTIIEIINMSVSGV.

The helical transmembrane segment at 420 to 436 (FVSLSFCMLLAFSTLVS) threads the bilayer.

The protein belongs to the Integrator subunit 2 family. In terms of assembly, component of the Integrator complex, composed of core subunits INTS1, INTS2, INTS3, INTS4, INTS5, INTS6, INTS7, INTS8, INTS9/RC74, INTS10, INTS11/CPSF3L, INTS12, INTS13, INTS14 and INTS15. The core complex associates with protein phosphatase 2A subunits PPP2CA and PPP2R1A, to form the Integrator-PP2A (INTAC) complex.

It localises to the nucleus. It is found in the nucleus membrane. The protein localises to the cytoplasm. Functionally, component of the integrator complex, a multiprotein complex that terminates RNA polymerase II (Pol II) transcription in the promoter-proximal region of genes. The integrator complex provides a quality checkpoint during transcription elongation by driving premature transcription termination of transcripts that are unfavorably configured for transcriptional elongation: the complex terminates transcription by (1) catalyzing dephosphorylation of the C-terminal domain (CTD) of Pol II subunit POLR2A/RPB1 and SUPT5H/SPT5, (2) degrading the exiting nascent RNA transcript via endonuclease activity and (3) promoting the release of Pol II from bound DNA. The integrator complex is also involved in terminating the synthesis of non-coding Pol II transcripts, such as enhancer RNAs (eRNAs), small nuclear RNAs (snRNAs), telomerase RNAs and long non-coding RNAs (lncRNAs). The protein is Integrator complex subunit 2 (INTS2) of Gallus gallus (Chicken).